The primary structure comprises 61 residues: Small ribosomal subunit protein uS14 (61 aa).

Zn(2+) is bound by residues Cys24, Cys27, Cys40, and Cys43.

It belongs to the universal ribosomal protein uS14 family. Zinc-binding uS14 subfamily. As to quaternary structure, part of the 30S ribosomal subunit. Contacts proteins S3 and S10. Zn(2+) serves as cofactor.

Binds 16S rRNA, required for the assembly of 30S particles and may also be responsible for determining the conformation of the 16S rRNA at the A site. This is Small ribosomal subunit protein uS14 from Campylobacter fetus subsp. fetus (strain 82-40).